Here is a 199-residue protein sequence, read N- to C-terminus: 7-methyl-GTP pyrophosphatase (199 aa).

Catalysis depends on Asp76, which acts as the Proton acceptor.

This sequence belongs to the Maf family. YceF subfamily. Requires a divalent metal cation as cofactor.

It localises to the cytoplasm. It catalyses the reaction N(7)-methyl-GTP + H2O = N(7)-methyl-GMP + diphosphate + H(+). Functionally, nucleoside triphosphate pyrophosphatase that hydrolyzes 7-methyl-GTP (m(7)GTP). May have a dual role in cell division arrest and in preventing the incorporation of modified nucleotides into cellular nucleic acids. The sequence is that of 7-methyl-GTP pyrophosphatase from Rhizobium etli (strain ATCC 51251 / DSM 11541 / JCM 21823 / NBRC 15573 / CFN 42).